The following is a 243-amino-acid chain: uncharacterized protein (243 aa).

The N-terminal stretch at 1-16 (MKLLALVALCAVGVAS) is a signal peptide. Asn55 carries N-linked (GlcNAc...) asparagine glycosylation. Disordered stretches follow at residues 95–126 (SQGR…EKPS) and 208–235 (NQQQ…KPTV). Composition is skewed to low complexity over residues 99 to 112 (NQQQ…SQGG) and 209 to 229 (QQQQ…STTL). Residues Cys141 and Cys239 are joined by a disulfide bond.

The protein belongs to the protease inhibitor I33 family.

It is found in the secreted. This is an uncharacterized protein from Caenorhabditis elegans.